The chain runs to 218 residues: Small ribosomal subunit protein uS3c (218 aa).

The region spanning 47–118 is the KH type-2 domain; it reads VQKNMRTSSG…KLNIAVTRIA (72 aa).

It belongs to the universal ribosomal protein uS3 family. Part of the 30S ribosomal subunit.

Its subcellular location is the plastid. It is found in the chloroplast. The protein is Small ribosomal subunit protein uS3c (rps3) of Nicotiana sylvestris (Wood tobacco).